The primary structure comprises 359 residues: DNA replication and repair protein RecF (359 aa).

Position 30–37 (30–37 (GPNGSGKT)) interacts with ATP.

The protein belongs to the RecF family.

The protein localises to the cytoplasm. The RecF protein is involved in DNA metabolism; it is required for DNA replication and normal SOS inducibility. RecF binds preferentially to single-stranded, linear DNA. It also seems to bind ATP. This Aliivibrio fischeri (strain ATCC 700601 / ES114) (Vibrio fischeri) protein is DNA replication and repair protein RecF.